The chain runs to 416 residues: Serine hydroxymethyltransferase (416 aa).

Residues Leu118 and 122–124 (GHL) contribute to the (6S)-5,6,7,8-tetrahydrofolate site. Residue Lys226 is modified to N6-(pyridoxal phosphate)lysine. (6S)-5,6,7,8-tetrahydrofolate-binding positions include Glu242 and 350-352 (SPF).

Belongs to the SHMT family. In terms of assembly, homodimer. Requires pyridoxal 5'-phosphate as cofactor.

The protein localises to the cytoplasm. The catalysed reaction is (6R)-5,10-methylene-5,6,7,8-tetrahydrofolate + glycine + H2O = (6S)-5,6,7,8-tetrahydrofolate + L-serine. It functions in the pathway one-carbon metabolism; tetrahydrofolate interconversion. It participates in amino-acid biosynthesis; glycine biosynthesis; glycine from L-serine: step 1/1. Catalyzes the reversible interconversion of serine and glycine with tetrahydrofolate (THF) serving as the one-carbon carrier. This reaction serves as the major source of one-carbon groups required for the biosynthesis of purines, thymidylate, methionine, and other important biomolecules. Also exhibits THF-independent aldolase activity toward beta-hydroxyamino acids, producing glycine and aldehydes, via a retro-aldol mechanism. The polypeptide is Serine hydroxymethyltransferase (Helicobacter hepaticus (strain ATCC 51449 / 3B1)).